The primary structure comprises 385 residues: DNA double-strand break repair protein Mre11 (385 aa).

The Mn(2+) site is built by aspartate 14, histidine 16, and aspartate 58. Histidine 94 (proton donor) is an active-site residue. Residues histidine 180, histidine 216, and histidine 218 each contribute to the Mn(2+) site.

Belongs to the MRE11/RAD32 family. In terms of assembly, homodimer. Forms a heterotetramer composed of two Mre11 subunits and two Rad50 subunits. Homodimerization facilitates DNA binding. The cofactor is Mn(2+).

Nuclease activity is regulated by Rad50. The mirin-derivative PFM39, specifically inhibits the 3'-5' exonuclease activity. The N-alkylated mirin-derivatives PFM03 and PFM01 specifically inhibit the endonuclease activity. Its function is as follows. Part of the Rad50/Mre11 complex, which is involved in the early steps of DNA double-strand break (DSB) repair. The complex may facilitate opening of the processed DNA ends to aid in the recruitment of HerA and NurA. Mre11 binds to DSB ends and has both double-stranded 3'-5' exonuclease activity and single-stranded endonuclease activity. The sequence is that of DNA double-strand break repair protein Mre11 from Thermotoga maritima (strain ATCC 43589 / DSM 3109 / JCM 10099 / NBRC 100826 / MSB8).